The sequence spans 355 residues: S-adenosylmethionine:tRNA ribosyltransferase-isomerase (355 aa).

The protein belongs to the QueA family. In terms of assembly, monomer.

It localises to the cytoplasm. The catalysed reaction is 7-aminomethyl-7-carbaguanosine(34) in tRNA + S-adenosyl-L-methionine = epoxyqueuosine(34) in tRNA + adenine + L-methionine + 2 H(+). It participates in tRNA modification; tRNA-queuosine biosynthesis. Transfers and isomerizes the ribose moiety from AdoMet to the 7-aminomethyl group of 7-deazaguanine (preQ1-tRNA) to give epoxyqueuosine (oQ-tRNA). This is S-adenosylmethionine:tRNA ribosyltransferase-isomerase from Burkholderia orbicola (strain AU 1054).